The following is a 491-amino-acid chain: Probable cytosol aminopeptidase (491 aa).

2 residues coordinate Mn(2+): Lys264 and Asp269. Residue Lys276 is part of the active site. Mn(2+) is bound by residues Asp287, Asp346, and Glu348. Residue Arg350 is part of the active site.

This sequence belongs to the peptidase M17 family. It depends on Mn(2+) as a cofactor.

It is found in the cytoplasm. The catalysed reaction is Release of an N-terminal amino acid, Xaa-|-Yaa-, in which Xaa is preferably Leu, but may be other amino acids including Pro although not Arg or Lys, and Yaa may be Pro. Amino acid amides and methyl esters are also readily hydrolyzed, but rates on arylamides are exceedingly low.. It catalyses the reaction Release of an N-terminal amino acid, preferentially leucine, but not glutamic or aspartic acids.. In terms of biological role, presumably involved in the processing and regular turnover of intracellular proteins. Catalyzes the removal of unsubstituted N-terminal amino acids from various peptides. The chain is Probable cytosol aminopeptidase from Xylella fastidiosa (strain M12).